Consider the following 376-residue polypeptide: PqqA peptide cyclase (376 aa).

The region spanning 4–219 is the Radical SAM core domain; sequence VPPPLSVLLE…VETARRSLGD (216 aa). The [4Fe-4S] cluster site is built by Cys18, Cys22, and Cys25.

This sequence belongs to the radical SAM superfamily. PqqE family. Interacts with PqqD. The interaction is necessary for activity of PqqE. Requires [4Fe-4S] cluster as cofactor.

The catalysed reaction is [PQQ precursor protein] + S-adenosyl-L-methionine = E-Y cross-linked-[PQQ precursor protein] + 5'-deoxyadenosine + L-methionine + H(+). The protein operates within cofactor biosynthesis; pyrroloquinoline quinone biosynthesis. Its function is as follows. Catalyzes the cross-linking of a glutamate residue and a tyrosine residue in the PqqA protein as part of the biosynthesis of pyrroloquinoline quinone (PQQ). In Xanthomonas campestris pv. campestris (strain B100), this protein is PqqA peptide cyclase.